A 277-amino-acid chain; its full sequence is Uridine-cytidine kinase 1 (277 aa).

Positions 1 to 30 (MASAGGGGSESAAPEADRPQPRPFLIGVSG) are disordered. 30-38 (GGTASGKST) serves as a coordination point for ATP. Substrate contacts are provided by Asp87, Tyr115, His120, Arg169, Arg178, and Gln186. Residue Asp215 participates in ATP binding. Residues 238 to 250 (RHRGGPNGRNHKR) show a composition bias toward basic residues. The interval 238–277 (RHRGGPNGRNHKRTFPEPGDHPGVLATGKRSHLESSSRPH) is disordered. Thr251 carries the post-translational modification Phosphothreonine. Residues 268–277 (SHLESSSRPH) are compositionally biased toward basic and acidic residues.

This sequence belongs to the uridine kinase family.

The enzyme catalyses uridine + ATP = UMP + ADP + H(+). It carries out the reaction cytidine + ATP = CMP + ADP + H(+). The protein operates within pyrimidine metabolism; CTP biosynthesis via salvage pathway; CTP from cytidine: step 1/3. It participates in pyrimidine metabolism; UMP biosynthesis via salvage pathway; UMP from uridine: step 1/1. Its function is as follows. Phosphorylates uridine and cytidine to uridine monophosphate and cytidine monophosphate. Does not phosphorylate deoxyribonucleosides or purine ribonucleosides. Can use ATP or GTP as a phosphate donor. The sequence is that of Uridine-cytidine kinase 1 (Uck1) from Mus musculus (Mouse).